Here is a 305-residue protein sequence, read N- to C-terminus: MENLTENQATNNNSPFRIKSSLAQMLKGGVIMDVVTPEQARIAEEAGACAVMALEKIPADIRHFGGVARMSDPGMIKEIMNAVTIPVMAKVRIGHFVEAQILQEIGVDYIDESEVLTIADNENHIDKSEFKVPFVCGCRNLGEALRRISEGAAMIRTKGEAGTGDVVEAVRHARAVNKEIKKIQNMDPHELYTYAKEIQAPLELVKEVKRLGRLPVVNFAAGGVATPADAAMMMQLGMDGVFVGSGIFKSGDPAKRAKAIVQAVTHFNNPQIVAKVSENLGEAMVGINVDTLKDKENQNWSTKEK.

Residue Asp-33 participates in D-ribose 5-phosphate binding. Lys-90 acts as the Schiff-base intermediate with D-ribose 5-phosphate in catalysis. Gly-162 is a D-ribose 5-phosphate binding site. A D-glyceraldehyde 3-phosphate-binding site is contributed by Arg-174. Residues Gly-223 and 244–245 (GS) contribute to the D-ribose 5-phosphate site.

This sequence belongs to the PdxS/SNZ family. In terms of assembly, homohexamer.

It catalyses the reaction aldehydo-D-ribose 5-phosphate + D-glyceraldehyde 3-phosphate + L-glutamine = pyridoxal 5'-phosphate + L-glutamate + phosphate + 3 H2O + H(+). It participates in cofactor biosynthesis; pyridoxal 5'-phosphate biosynthesis. Catalyzes the formation of pyridoxal 5'-phosphate from ribose 5-phosphate (RBP), glyceraldehyde 3-phosphate (G3P) and ammonia. The ammonia is provided by pdx2. Can also use ribulose 5-phosphate and dihydroxyacetone phosphate as substrates, resulting from enzyme-catalyzed isomerization of RBP and G3P, respectively. This chain is Probable pyridoxal 5'-phosphate synthase subunit pdx1 (pdx1), found in Dictyostelium discoideum (Social amoeba).